A 436-amino-acid polypeptide reads, in one-letter code: Anaerobic glycerol-3-phosphate dehydrogenase subunit B (436 aa).

This sequence belongs to the anaerobic G-3-P dehydrogenase subunit B family. In terms of assembly, composed of a catalytic GlpA/B dimer and of membrane bound GlpC. FMN serves as cofactor.

The catalysed reaction is a quinone + sn-glycerol 3-phosphate = dihydroxyacetone phosphate + a quinol. Its pathway is polyol metabolism; glycerol degradation via glycerol kinase pathway; glycerone phosphate from sn-glycerol 3-phosphate (anaerobic route): step 1/1. In terms of biological role, conversion of glycerol 3-phosphate to dihydroxyacetone. Uses fumarate or nitrate as electron acceptor. The chain is Anaerobic glycerol-3-phosphate dehydrogenase subunit B from Vibrio cholerae serotype O1 (strain M66-2).